The chain runs to 550 residues: Hydroxylamine reductase (550 aa).

[2Fe-2S] cluster contacts are provided by C3, C6, C18, and C25. The hybrid [4Fe-2O-2S] cluster site is built by H249, E273, C317, C405, C433, C458, E492, and K494. Residue C405 is modified to Cysteine persulfide.

It belongs to the HCP family. [2Fe-2S] cluster is required as a cofactor. The cofactor is hybrid [4Fe-2O-2S] cluster.

The protein resides in the cytoplasm. It catalyses the reaction A + NH4(+) + H2O = hydroxylamine + AH2 + H(+). Its function is as follows. Catalyzes the reduction of hydroxylamine to form NH(3) and H(2)O. The protein is Hydroxylamine reductase of Salmonella choleraesuis (strain SC-B67).